Here is a 279-residue protein sequence, read N- to C-terminus: DegV domain-containing protein SpyM3_1149 (279 aa).

A DegV domain is found at 4-278 (IKIVTDSSIT…EGAFAVMVRY (275 aa)). Thr-62 and Ser-95 together coordinate hexadecanoate.

Functionally, may bind long-chain fatty acids, such as palmitate, and may play a role in lipid transport or fatty acid metabolism. The sequence is that of DegV domain-containing protein SpyM3_1149 from Streptococcus pyogenes serotype M3 (strain ATCC BAA-595 / MGAS315).